Here is a 1823-residue protein sequence, read N- to C-terminus: Laminin subunit alpha-4 (1823 aa).

Positions 1 to 24 are cleaved as a signal peptide; that stretch reads MALSSAWRSVLPLWLLWSAACSRA. The O-linked (Xyl...) (chondroitin sulfate) serine glycan is linked to S39. 12 cysteine pairs are disulfide-bonded: C82–C91, C84–C98, C101–C110, C113–C129, C132–C146, C134–C155, C157–C166, C169–C184, C187–C202, C189–C209, C212–C221, and C224–C238. Laminin EGF-like domains follow at residues 82–131, 132–186, and 187–240; these read CDCN…FCQP, CPCP…TCKK, and CDCS…NCAV. Residue N104 is glycosylated (N-linked (GlcNAc...) asparagine). The N-linked (GlcNAc...) asparagine glycan is linked to N215. Residues 241–255 form the Laminin EGF-like 4; truncated domain; the sequence is CNCGGGPCDSVTGEC. The domain II and I stretch occupies residues 256–832; sequence LEEGFEPPTG…AQTRSVASKI (577 aa). N315 is a glycosylation site (N-linked (GlcNAc...) asparagine). The stretch at 320–403 forms a coiled coil; the sequence is LLKTKLSERE…KIQEINNKML (84 aa). The N-linked (GlcNAc...) asparagine glycan is linked to N465. Residues 473–528 adopt a coiled-coil conformation; the sequence is VVLEQLDDYNAKLSDLQEALDQALNYVRDAEDMNRATAARQRDHEKQQERVREQME. 6 N-linked (GlcNAc...) asparagine glycosylation sites follow: N531, N557, N578, N581, N638, and N646. Residues 581 to 614 adopt a coiled-coil conformation; that stretch reads NLSHDLVQEAIDHAQDLQQEANELSRKLHSSDMN. A coiled-coil region spans residues 662 to 724; the sequence is IIYHKDESEN…AVKQLQAAER (63 aa). Residues 724 to 726 carry the Cell attachment site motif; sequence RGD. N742, N758, N761, N787, and N810 each carry an N-linked (GlcNAc...) asparagine glycan. The stretch at 777–806 forms a coiled coil; it reads AVNSARDAVRNLTEVVPQLLDQLRTVEQKR. 3 Laminin G-like domains span residues 833-1035, 1047-1227, and 1234-1402; these read QVSM…SVPC, AASY…GYGC, and SRRA…LYEC. Cysteines 1005 and 1035 form a disulfide. N-linked (GlcNAc...) asparagine glycosylation occurs at N1093. The cysteines at positions 1201 and 1227 are disulfide-linked. N1288 and N1366 each carry an N-linked (GlcNAc...) asparagine glycan. A disulfide bond links C1370 and C1402. Residue N1418 is glycosylated (N-linked (GlcNAc...) asparagine). Residues 1419-1440 are disordered; it reads LSKPKASQNKKGGKSKDAPSWD. 2 Laminin G-like domains span residues 1469-1640 and 1647-1820; these read AYQY…VTPC and TGTY…INSC. Cystine bridges form between C1617–C1640 and C1792–C1820.

Laminin is a complex glycoprotein, consisting of three different polypeptide chains (alpha, beta, gamma), which are bound to each other by disulfide bonds into a cross-shaped molecule comprising one long and three short arms with globules at each end. Alpha-4 is a subunit of laminin-8 (laminin-411), laminin-9 (laminin-421) and laminin-14 (laminin-423). In terms of tissue distribution, detected in placenta (at protein level). Detected in fibroblasts and urine (at protein level). In adult, strong expression in heart, lung, ovary small and large intestines, placenta, liver; weak or no expression in skeletal muscle, kidney, pancreas, testis, prostate, brain. High expression in fetal lung and kidney. Expression in fetal and newborn tissues is observed in certain mesenchymal cells in tissues such as smooth muscle and dermis.

It localises to the secreted. It is found in the extracellular space. The protein localises to the extracellular matrix. Its subcellular location is the basement membrane. Binding to cells via a high affinity receptor, laminin is thought to mediate the attachment, migration and organization of cells into tissues during embryonic development by interacting with other extracellular matrix components. This is Laminin subunit alpha-4 (LAMA4) from Homo sapiens (Human).